The primary structure comprises 659 residues: ATP-binding cassette sub-family D member 3 (659 aa).

The tract at residues 1–61 (MAAFSKYLTA…GKKERAVVDK (61 aa)) is interaction with PEX19. A glycan (N-linked (GlcNAc...) asparagine) is linked at Asn12. Lys61 is modified (N6-acetyllysine). A helical transmembrane segment spans residues 84–104 (GYLLLIAVMLVSRTYCDVWMI). One can recognise an ABC transmembrane type-1 domain in the interval 85-372 (YLLLIAVMLV…MLLRMSQALG (288 aa)). An N-linked (GlcNAc...) asparagine glycan is attached at Asn106. Residues 126 to 146 (LFNFIAAMPLISLVNNFLKYG) form a helical membrane-spanning segment. Asn206 carries N-linked (GlcNAc...) asparagine glycosylation. The chain crosses the membrane as a helical span at residues 224 to 244 (AIGAQGPASMMAYLLVSGLFL). Lys260 is modified (N6-acetyllysine). A helical transmembrane segment spans residues 313–333 (MGFIDSIIAKYVATVVGYLVV). Lys399 bears the N6-acetyllysine mark. Ser424 bears the Phosphoserine mark. The ABC transporter domain occupies 434 to 659 (INTDNIIKFD…ITEDTVEFGS (226 aa)). 473 to 480 (GPNGCGKS) serves as a coordination point for ATP. Position 533 is an N6-acetyllysine (Lys533). A Phosphoserine modification is found at Ser659.

The protein belongs to the ABC transporter superfamily. ABCD family. Peroxisomal fatty acyl CoA transporter (TC 3.A.1.203) subfamily. Homodimers. Can form heterodimers with ABCD1 and ABCD2. Dimerization is necessary to form an active transporter. Interacts with PEX19; mediates the targeting of ABCD3 to peroxisomes. Post-translationally, ubiquitinated by PEX2 during pexophagy in response to starvation, leading to its degradation.

The protein resides in the peroxisome membrane. It catalyses the reaction a very long-chain fatty acyl-CoA + H2O = a very long-chain fatty acid + CoA + H(+). The enzyme catalyses a very long-chain fatty acid(in) + ATP + H2O = a very long-chain fatty acid(out) + ADP + phosphate + H(+). The catalysed reaction is a long-chain fatty acyl-CoA + H2O = a long-chain fatty acid + CoA + H(+). It carries out the reaction a long-chain fatty acid(in) + ATP + H2O = a long-chain fatty acid(out) + ADP + phosphate + H(+). It catalyses the reaction pristanoyl-CoA + H2O = 2,6,10,14-tetramethylpentadecanoate + CoA + H(+). The enzyme catalyses 2,6,10,14-tetramethylpentadecanoate(in) + ATP + H2O = 2,6,10,14-tetramethylpentadecanoate(out) + ADP + phosphate + H(+). The catalysed reaction is hexadecanedioyl-CoA + H2O = hexadecanedioate + CoA + H(+). It carries out the reaction hexadecanedioate(in) + ATP + H2O = hexadecanedioate(out) + ADP + phosphate + H(+). It catalyses the reaction (5Z,8Z,11Z,14Z,17Z)-eicosapentaenoyl-CoA + H2O = (5Z,8Z,11Z,14Z,17Z)-eicosapentaenoate + CoA + H(+). The enzyme catalyses (5Z,8Z,11Z,14Z,17Z)-eicosapentaenoate(in) + ATP + H2O = (5Z,8Z,11Z,14Z,17Z)-eicosapentaenoate(out) + ADP + phosphate + H(+). The catalysed reaction is (4Z,7Z,10Z,13Z,16Z,19Z)-docosahexaenoyl-CoA + H2O = (4Z,7Z,10Z,13Z,16Z,19Z)-docosahexaenoate + CoA + H(+). It carries out the reaction (4Z,7Z,10Z,13Z,16Z,19Z)-docosahexaenoate(in) + ATP + H2O = (4Z,7Z,10Z,13Z,16Z,19Z)-docosahexaenoate(out) + ADP + phosphate + H(+). Its function is as follows. Broad substrate specificity ATP-dependent transporter of the ATP-binding cassette (ABC) family that catalyzes the transport of long-chain fatty acids (LCFA)-CoA, dicarboxylic acids-CoA, long-branched-chain fatty acids-CoA and bile acids from the cytosol to the peroxisome lumen for beta-oxydation. Has fatty acyl-CoA thioesterase and ATPase activities. Probably hydrolyzes fatty acyl-CoAs into free fatty acids prior to their ATP-dependent transport into peroxisomes. Thus, play a role in regulation of LCFAs and energy metabolism namely, in the degradation and biosynthesis of fatty acids by beta-oxidation. This chain is ATP-binding cassette sub-family D member 3 (Abcd3), found in Mus musculus (Mouse).